The primary structure comprises 250 residues: Glutathione transferase omega-1 (250 aa).

Residues 21 to 101 (SKGSFRVYNM…YLDDAFPETR (81 aa)) enclose the GST N-terminal domain. Cys33 acts as the Nucleophile in catalysis. Glutathione is bound by residues Lys60 and 85–86 (ES). One can recognise a GST C-terminal domain in the interval 106–234 (DPYEKVQQKL…TQSLEHGAAF (129 aa)).

The protein belongs to the GST superfamily. Omega family. In terms of assembly, homodimer. In terms of tissue distribution, expressed in the intestinal cells.

The protein resides in the cytoplasm. The catalysed reaction is RX + glutathione = an S-substituted glutathione + a halide anion + H(+). It carries out the reaction L-dehydroascorbate + 2 glutathione = glutathione disulfide + L-ascorbate. The enzyme catalyses methylarsonate + 2 glutathione + H(+) = methylarsonous acid + glutathione disulfide + H2O. In terms of biological role, exhibits glutathione-dependent thiol transferase activity. Has dehydroascorbate reductase activity and may contribute to the recycling of ascorbic acid. Participates in the biotransformation of inorganic arsenic and reduces monomethylarsonic acid (MMA). Protects against environmental stress and oxidative stress. This is Glutathione transferase omega-1 (gsto-1) from Caenorhabditis elegans.